Consider the following 47-residue polypeptide: PhoP/PhoQ regulator MgrB (47 aa).

The chain crosses the membrane as a helical span at residues 6-26 (WLVLIVVVLACLVLWAQVINI).

It belongs to the MgrB family. As to quaternary structure, may form homooligomers. Probably interacts with the periplasmic domain of PhoQ.

The protein resides in the cell inner membrane. PhoP-regulated transcription is redox-sensitive, being activated when the periplasm becomes more reducing. MgrB acts between DsbA/DsbB and PhoP/PhoQ in this pathway. Represses PhoP/PhoQ signaling, possibly by binding to the periplasmic domain of PhoQ, altering its activity and that of downstream effector PhoP. This chain is PhoP/PhoQ regulator MgrB, found in Escherichia fergusonii (strain ATCC 35469 / DSM 13698 / CCUG 18766 / IAM 14443 / JCM 21226 / LMG 7866 / NBRC 102419 / NCTC 12128 / CDC 0568-73).